A 610-amino-acid chain; its full sequence is UvrABC system protein C (610 aa).

The region spanning 16–94 is the GIY-YIG domain; it reads SQPGVYRMYD…IKLYQPRYNV (79 aa). The UVR domain maps to 204–239; sequence DQVINQLVSRMEQASQNLAFEEAARLRDQIQAVRRV.

Belongs to the UvrC family. As to quaternary structure, interacts with UvrB in an incision complex.

The protein resides in the cytoplasm. Its function is as follows. The UvrABC repair system catalyzes the recognition and processing of DNA lesions. UvrC both incises the 5' and 3' sides of the lesion. The N-terminal half is responsible for the 3' incision and the C-terminal half is responsible for the 5' incision. This chain is UvrABC system protein C, found in Cronobacter sakazakii (strain ATCC BAA-894) (Enterobacter sakazakii).